Here is a 513-residue protein sequence, read N- to C-terminus: MTLEKFVDALPIPDTLKPVQQSKEKTYYEVTMEECTHQLHRDLPPTRLWGYNGLFPGPTIEVKRNENVYVKWMNNLPSTHFLPIDHTIHHSDSQHEEPEVKTVVHLHGGVTPDDSDGYPEAWFSKDFEQTGPYFKREVYHYPNQQRGAILWYHDHAMALTRLNVYAGLVGAYIIHDPKEKRLKLPSDEYDVPLLITDRTINEDGSLFYPSAPENPSPSLPNPSIVPAFCGETILVNGKVWPYLEVEPRKYRFRVINASNTRTYNLSLDNGGDFIQIGSDGGLLPRSVKLNSFSLAPAERYDIIIDFTAYEGESIILANSAGCGGDVNPETDANIMQFRVTKPLAQKDESRKPKYLASYPSVQHERIQNIRTLKLAGTQDEYGRPVLLLNNKRWHDPVTETPKVGTTEIWSIINPTRGTHPIHLHLVSFRVLDRRPFDIARYQESGELSYTGPAVPPPPSEKGWKDTIQAHAGEVLRIAATFGPYSGRYVWHCHILEHEDYDMMRPMDITDPHK.

Plastocyanin-like domains are found at residues 45–81, 101–178, 240–318, and 378–509; these read PTRL…STHF, KTVV…HDPK, WPYL…ILAN, and QDEY…MDIT. Cu cation-binding residues include histidine 105, histidine 107, histidine 153, and histidine 155. The Cu cation site is built by histidine 419, histidine 422, histidine 424, histidine 491, cysteine 492, histidine 493, histidine 497, and methionine 502.

Belongs to the multicopper oxidase family. In terms of assembly, monomer. The cofactor is Cu(2+).

The protein resides in the spore coat. It catalyses the reaction 4 hydroquinone + O2 = 4 benzosemiquinone + 2 H2O. It carries out the reaction 2 (4Z,15Z)-bilirubin IXalpha + O2 = 2 biliverdin IXalpha + 2 H2O. Inhibited by azide. Functionally, multicopper oxidase that catalyzes the oxidation of a variety of substrates, including phenolic and non-phenolic compounds. Substrates include syringaldazine (SGZ), 2,6-dimethoxyphenol (2,6-DMP) and the non-phenolic compound 2,2'-azino-bis(3-ethylbenzothiazoline-6-sulfonic acid) (ABTS). Has no tyrosinase activity. Is implicated in the biosynthesis of a brownish pigment that characterizes sporulating colonies of B.subtilis, and which appears to be a melanin-like product and to confer protection against UV light. In vitro, also shows strong bilirubin oxidase (BOD) activity, and can catalyze the oxidation of free bilirubin (UB), direct bilirubin (conjugated with glucuronic acid, DB) and ditaurobilirubin. In Bacillus subtilis (strain 168), this protein is Laccase.